We begin with the raw amino-acid sequence, 207 residues long: MIOREX complex component 11 (207 aa).

The transit peptide at 1-46 (MTVMNLFFRPCQLQMGSGPLELMLKRPTQLTTFMNTRPGGSTQIRF) directs the protein to the mitochondrion. Topologically, residues 47-98 (ISGNLDPVKRREDRLRKIFSKSRLLTRLNKNPKFSHYFDRLSEAGTVPTLTS) are mitochondrial matrix. Residues 99-119 (FFILHEVTAILPLFLLWWLLY) form a helical membrane-spanning segment. Residues 120-177 (NLDLSDDFKLPNFLNGLMDSCHTAMEKFVGKRYQECLNKNKLILSGTVAYVTVKLLYP) lie on the Mitochondrial intermembrane side of the membrane. Residues 178–198 (VRIFISIWGAPYFGKWLLLPF) form a helical membrane-spanning segment. Residues 199-207 (QKLKHLIKK) are Mitochondrial matrix-facing.

The protein belongs to the MRX11 family. As to quaternary structure, associates with the mitochondrial ribosome.

Its subcellular location is the mitochondrion. The protein resides in the mitochondrion inner membrane. Component of MIOREX complexes, large expressome-like assemblies of ribosomes with factors involved in all the steps of post-transcriptional gene expression. This Saccharomyces cerevisiae (strain ATCC 204508 / S288c) (Baker's yeast) protein is MIOREX complex component 11.